A 166-amino-acid polypeptide reads, in one-letter code: Cold-inducible RNA-binding protein (166 aa).

Residues 6–84 form the RRM domain; the sequence is GKLFVGGLNF…RQIRVDQAGK (79 aa). Positions 68–166 are disordered; the sequence is NGKSVDGRQI…DSYDSYTTQE (99 aa). Residues 93–120 are compositionally biased toward gly residues; the sequence is YRGGSSGGRGFFRGGRGRGGGGDRGYGG. Residues 121–166 are compositionally biased toward low complexity; sequence SSRFENRSGGYQSSGSRDYYGRSHGSYGDRSGGSYRDSYDSYTTQE.

In terms of assembly, interacts with prmt1. Interacts with elavl1/elrA (via RRM3). Associates with ribosomes. In terms of processing, methylated on arginine residues within RGG motifs. Methylation by prmt1 promotes cytoplasmic accumulation.

Its subcellular location is the nucleus. It localises to the nucleoplasm. The protein resides in the cytoplasm. In terms of biological role, cold-inducible mRNA binding protein. Acts cooperatively with elavl1/elrA to stabilize AU-rich element (ARE)-containing mRNAs by binding to themm and inhibiting their deadenylation. Essential for embryonic gastrulation and neural development, acting to maintain the expression of a set of adhesion molecules, and cell movement during embryogenesis. Required for pronephros development. This chain is Cold-inducible RNA-binding protein, found in Xenopus tropicalis (Western clawed frog).